We begin with the raw amino-acid sequence, 325 residues long: Aquaporin-8 (325 aa).

At methionine 1–tyrosine 10 the chain is on the cytoplasmic side. Residues leucine 11 to alanine 31 form a helical membrane-spanning segment. Residues alanine 32–serine 52 are Extracellular-facing. N-linked (GlcNAc...) asparagine glycosylation is found at asparagine 39 and asparagine 47. Residues lysine 53–phenylalanine 73 form a helical membrane-spanning segment. The Cytoplasmic portion of the chain corresponds to arginine 74–leucine 100. The NPA 1 motif lies at asparagine 81–alanine 83. The helical transmembrane segment at isoleucine 101 to isoleucine 121 threads the bilayer. Residues proline 122–glutamine 140 lie on the Extracellular side of the membrane. A helical transmembrane segment spans residues glycine 141–alanine 161. The Cytoplasmic portion of the chain corresponds to glutamate 162 to threonine 167. Residues phenylalanine 168–tryptophan 188 traverse the membrane as a helical segment. The Extracellular portion of the chain corresponds to threonine 189 to histidine 212. Positions asparagine 194–alanine 196 match the NPA 2 motif. The helical transmembrane segment at tryptophan 213–leucine 233 threads the bilayer. Over lysine 234–threonine 325 the chain is Cytoplasmic. 2 disordered regions span residues leucine 279–glycine 298 and glutamate 305–threonine 325. Residues threonine 286–glycine 298 show a composition bias toward basic and acidic residues.

This sequence belongs to the MIP/aquaporin (TC 1.A.8) family.

The protein localises to the cell membrane. The catalysed reaction is H2O2(out) = H2O2(in). It catalyses the reaction H2O(in) = H2O(out). Functionally, plasma membrane water channel that regulates the reactive oxygen species (ROS)-signaling pathway through its capacity to act as a membrane channel for hydrogen peroxide uptake. Required for the formation of infection structures and infection, especially on host leaves where it is essential for the penetration into the host. Regulates the expression of proteins related to redox-regulation and intracellular signal transduction and plays a role in the distribution of mitochondria in the hyphae. The chain is Aquaporin-8 from Botryotinia fuckeliana (strain B05.10) (Noble rot fungus).